Consider the following 636-residue polypeptide: Chaperone protein DnaK2 (636 aa).

A Phosphothreonine; by autocatalysis modification is found at T198. Residues 604–618 are compositionally biased toward low complexity; that stretch reads EAGVGAPGAGPEAGT. The disordered stretch occupies residues 604 to 636; the sequence is EAGVGAPGAGPEAGTSSGGGDDVIDAEFSEPEK. Over residues 625-636 the composition is skewed to acidic residues; it reads DVIDAEFSEPEK.

This sequence belongs to the heat shock protein 70 family.

Acts as a chaperone. In Synechocystis sp. (strain ATCC 27184 / PCC 6803 / Kazusa), this protein is Chaperone protein DnaK2 (dnaK2).